We begin with the raw amino-acid sequence, 137 residues long: Cucumber peeling cupredoxin (137 aa).

Q1 carries the pyrrolidone carboxylic acid modification. Residues 3–107 (TVHIVGDNTG…GQKLSINVVA (105 aa)) form the Phytocyanin domain. Residues H46, C89, H94, and Q99 each coordinate Cu cation. Cysteines 60 and 95 form a disulfide. The N-linked (GlcNAc...) asparagine glycan is linked to N109. The disordered stretch occupies residues 112-137 (VSMPPPSSSPPSSVMPPPVMPPPSPS). A compositionally biased stretch (pro residues) spans 114-137 (MPPPSSSPPSSVMPPPVMPPPSPS). A 4-hydroxyproline; partial modification is found at P115. A 4-hydroxyproline mark is found at P116, P117, P121, and P122. 4-hydroxyproline; partial is present on P127. 5 positions are modified to 4-hydroxyproline: P128, P129, P133, P134, and P136.

In Cucumis sativus (Cucumber), this protein is Cucumber peeling cupredoxin.